Consider the following 258-residue polypeptide: Terpene cyclase macJ (258 aa).

7 consecutive transmembrane segments (helical) span residues 29–49 (VPDGFTAISGILWSISYILMA), 58–78 (YAMPLHCLCLNITWEAVYGFV), 83–103 (LLNQVVFAQWMIVDVVLFYAI), 124–144 (IIVVGCVICLWLHLAIAATFI), 151–171 (VVFMTAWPMQVLINFSSIAQL), 181–201 (SWGIWWTRMLGTIAAACCFFW), and 220–240 (FLLLGSIGSDMVYAAVYVYVQ).

This sequence belongs to the paxB family.

The protein resides in the membrane. The protein operates within secondary metabolite biosynthesis; terpenoid biosynthesis. Its function is as follows. Terpene cyclase; part of the gene cluster that mediates the biosynthesis of macrophorins, isoprenoid epoxycyclohexenones containing cyclized drimane moieties. The first step of the pathway is the synthesis of 6-methylsalicylic acid (6-MSA) by the polyketide synthase macA. 6-MSA is then converted to m-cresol by the decarboxylase macB. The cytochrome P450 monooxygenase macC then catalyzes the oxidation of m-cresol to toluquinol. Epoxidation of toluquinol is then performed by the short chain dehydrogenase macD, with the help of macE, and a further prenylation by macG leads to 7-deacetoxyyanuthone A. The next step is the hydroxylation of C-22 of 7-deacetoxyyanuthone A by the cytochrome P450 monooxygenase macH to yield 22-deacetylyanuthone A. O-Mevalon transferase macI then attaches mevalon to the hydroxyl group of 22-deacetylyanuthone A to produce yanuthone E. The terpene cyclase macJ catalyzes the cyclization of 22-deacetylyanuthone A to macrophorin A. MacJ is also able to catalyze cyclization of yanuthone E and 7-deacetoxyyanuthone A to their corresponding macrophorins. The macJ products can be further modified by macH and macJ, as well as by the FAD-dependent monooxygenase macF, to produce additional macrophorins, including 4'-oxomacrophorin A, 4'-oxomacrophorin D and 4'-oxomacrophorin E. In Penicillium terrestre, this protein is Terpene cyclase macJ.